The chain runs to 256 residues: Homeobox protein goosecoid (256 aa).

The segment at residues 160 to 219 (KRRHRTIFTDEQLEALENLFQETKYPDVGTREQLARKVHLREEKVEVWFKNRRAKWRRQK) is a DNA-binding region (homeobox). The interval 213–256 (AKWRRQKRSSSEESENAEKWNKTSSKASPEKREEEGKSDLDSDS) is disordered. Basic and acidic residues predominate over residues 240-256 (SPEKREEEGKSDLDSDS).

Belongs to the paired homeobox family. Bicoid subfamily. In terms of tissue distribution, in early gastrulation, expressed in the dorsal lip. In later stages of development found in head, limbs and body wall. In the embryo, expressed in the postotic cranial neural crest cells, the frontonasal prominence, the first branchial arch and cleft, and specific regions of large joints.

The protein resides in the nucleus. Its function is as follows. Regulates chordin (CHRD). May play a role in spatial programing within discrete embryonic fields or lineage compartments during organogenesis. In concert with NKX3-2, plays a role in defining the structural components of the middle ear; required for the development of the entire tympanic ring. Goosecoid-expressing regions of the gastrulating mouse egg cylinder have organizer-like activity when transplanted into Xenopus embryos. Probably involved in the regulatory networks that define neural crest cell fate specification and determine mesoderm cell lineages in mammals. The polypeptide is Homeobox protein goosecoid (Gsc) (Mus musculus (Mouse)).